The primary structure comprises 469 residues: UDP-N-acetylmuramate--L-alanine ligase (469 aa).

An ATP-binding site is contributed by 112–118; sequence GTHGKTT.

Belongs to the MurCDEF family.

The protein resides in the cytoplasm. The enzyme catalyses UDP-N-acetyl-alpha-D-muramate + L-alanine + ATP = UDP-N-acetyl-alpha-D-muramoyl-L-alanine + ADP + phosphate + H(+). It participates in cell wall biogenesis; peptidoglycan biosynthesis. In terms of biological role, cell wall formation. The protein is UDP-N-acetylmuramate--L-alanine ligase of Methylibium petroleiphilum (strain ATCC BAA-1232 / LMG 22953 / PM1).